A 325-amino-acid chain; its full sequence is Retinal homeobox protein Rx-B (325 aa).

The short motif at 32-39 is the Octapeptide motif element; the sequence is HSIEAILG. Residues 75–87 show a composition bias toward basic and acidic residues; it reads TEEIHPQQEHLED. The interval 75–136 is disordered; it reads TEEIHPQQEH…KKKHRRNRTT (62 aa). Positions 99 to 117 are enriched in polar residues; the sequence is AKTSSECLSPGLSTSNSDN. The homeobox DNA-binding region spans 130 to 189; the sequence is HRRNRTTFTTYQLHELERAFEKSHYPDVYSREELAMKVNLPEVRVQVWFQNRRAKWRRQE. Positions 302 to 315 match the OAR motif; it reads NSIASLRMKAKEHI. The short motif at 308–312 is the Nuclear localization signal element; the sequence is RMKAK.

It belongs to the paired homeobox family. Bicoid subfamily. As to expression, highly expressed in anterior neural plate followed by neural retina, pigmented epithelium, in pineal gland, diencephalon floor and epiphysis. At later stages, the neuroretina remains the primary site of expression. No expression in the developing lens and cornea.

The protein localises to the nucleus. Its function is as follows. Plays a critical role in eye formation by regulating the initial specification of retinal cells and/or their subsequent proliferation. This is Retinal homeobox protein Rx-B (rax-b) from Xenopus laevis (African clawed frog).